The following is a 441-amino-acid chain: N-acetyl-S-(2-succino)cysteine monooxygenase (441 aa).

Residues Asp-59, Thr-96, His-146, Tyr-150, Ser-220, and Ser-221 each contribute to the FMN site.

This sequence belongs to the NtaA/SnaA/DszA monooxygenase family. Homodimer. FMN is required as a cofactor.

It carries out the reaction N-acetyl-S-(2-succino)-L-cysteine + NADH + O2 + H(+) = N-acetyl-L-cysteine + oxaloacetate + NAD(+) + H2O. The protein operates within amino-acid biosynthesis; L-cysteine biosynthesis. Functionally, catalyzes the oxidative cleavage of the C-S bond of N-acetyl-S-(2-succino)cysteine, forming oxaloacetate and N-acetylcysteine (NAC). Is involved in a S-(2-succino)cysteine (2SC) degradation pathway that allows B.subtilis to grow on 2SC as a sole sulfur source, via its metabolization to cysteine. Shows almost no activity on S-succinylglutathione and 2SC. The chain is N-acetyl-S-(2-succino)cysteine monooxygenase from Bacillus subtilis (strain 168).